The sequence spans 1044 residues: R3H domain-containing protein 2 (1044 aa).

Disordered regions lie at residues 23–71 (EESV…AKSN) and 106–147 (SCPS…QEYT). Basic and acidic residues predominate over residues 36–56 (PSKEDVEKEGEENGLRQETQR). Position 37 is a phosphoserine (S37). Residues 58–71 (TSSHGHARKRAKSN) are compositionally biased toward basic residues. Residues 109-143 (SDKEEEKSTKDVSEKEDKDKSKEKVPRKMLSRDSS) are compositionally biased toward basic and acidic residues. Position 143 is a phosphoserine (S143). The R3H domain maps to 169-232 (RMMLLKLEQE…AVIINKTSST (64 aa)). The SUZ domain maps to 233–303 (RIPEQRFSEH…VRERIFARET (71 aa)). Composition is skewed to basic and acidic residues over residues 261-270 (DASMDRDDNQ) and 277-288 (DGRRSKSIEERE). Disordered stretches follow at residues 261-288 (DASM…EERE), 320-408 (SSSS…LSRP), 433-485 (CTAQ…FSPS), 502-533 (MAED…LFQP), 551-600 (GQPL…SNQQ), 729-770 (GTSP…SPSG), and 807-848 (GQKP…SLSN). Positions 338-349 (SRTSSSRQSSTD) are enriched in low complexity. Phosphoserine occurs at positions 362, 365, and 381. Residues 433 to 449 (CTAQQQQQQQQQQQQLP) show a composition bias toward low complexity. 2 stretches are compositionally biased toward polar residues: residues 509–521 (PFGQ…QGST) and 554–572 (LPTS…QQVL). A compositionally biased stretch (low complexity) spans 757–770 (PQMSQQYSGVSPSG). A compositionally biased stretch (polar residues) spans 818 to 848 (GSPQANAQMGSSPVTSPTQSPAPSPVTSLSN). Residues S921 and S923 each carry the phosphoserine modification. Phosphothreonine occurs at positions 924 and 928.

Its subcellular location is the nucleus. This chain is R3H domain-containing protein 2 (R3hdm2), found in Mus musculus (Mouse).